Here is a 573-residue protein sequence, read N- to C-terminus: Sulfate adenylyltransferase (573 aa).

Residues 1–169 (MANSPHGGVL…LEAVNRLQHY (169 aa)) are N-terminal. Residues 170 to 394 (DFVELRYTPS…LRESHPPRSQ (225 aa)) form a catalytic region. Residue Gln197 participates in sulfate binding. ATP contacts are provided by residues 197–200 (QTRN) and 291–294 (GRDH). Catalysis depends on residues Thr198, Arg199, and Asn200. Residue Arg199 participates in sulfate binding. Ala295 contributes to the sulfate binding site. Position 333 (Met333) interacts with ATP. Positions 395 to 573 (QGFTIFLTGY…LESQGLLDRF (179 aa)) are allosteric regulation domain; adenylyl-sulfate kinase-like. 3'-phosphoadenylyl sulfate-binding positions include 434–437 (ETVR), Arg451, 477–478 (IA), and Arg515.

It in the N-terminal section; belongs to the sulfate adenylyltransferase family. The protein in the C-terminal section; belongs to the APS kinase family. Homohexamer. Dimer of trimers.

It is found in the cytoplasm. It carries out the reaction sulfate + ATP + H(+) = adenosine 5'-phosphosulfate + diphosphate. It participates in sulfur metabolism; hydrogen sulfide biosynthesis; sulfite from sulfate: step 1/3. With respect to regulation, allosterically inhibited by 3'-phosphoadenosine 5'-phosphosulfate (PAPS). Functionally, catalyzes the first intracellular reaction of sulfate assimilation, forming adenosine-5'-phosphosulfate (APS) from inorganic sulfate and ATP. Plays an important role in sulfate activation as a component of the biosynthesis pathway of sulfur-containing amino acids. The protein is Sulfate adenylyltransferase of Chaetomium globosum (strain ATCC 6205 / CBS 148.51 / DSM 1962 / NBRC 6347 / NRRL 1970) (Soil fungus).